Consider the following 369-residue polypeptide: Methionine import ATP-binding protein MetN 1 (369 aa).

An ABC transporter domain is found at 29-265 (IRLHGLGKRY…PRHAVTRSLL (237 aa)). Residue 62–69 (GRSGAGKS) participates in ATP binding.

The protein belongs to the ABC transporter superfamily. Methionine importer (TC 3.A.1.24) family. As to quaternary structure, the complex is composed of two ATP-binding proteins (MetN), two transmembrane proteins (MetI) and a solute-binding protein (MetQ).

It localises to the cell inner membrane. It catalyses the reaction L-methionine(out) + ATP + H2O = L-methionine(in) + ADP + phosphate + H(+). The enzyme catalyses D-methionine(out) + ATP + H2O = D-methionine(in) + ADP + phosphate + H(+). Part of the ABC transporter complex MetNIQ involved in methionine import. Responsible for energy coupling to the transport system. The polypeptide is Methionine import ATP-binding protein MetN 1 (Pseudomonas aeruginosa (strain ATCC 15692 / DSM 22644 / CIP 104116 / JCM 14847 / LMG 12228 / 1C / PRS 101 / PAO1)).